The sequence spans 417 residues: Phosphoglycerate kinase (417 aa).

The (2R)-3-phosphoglycerate site is built by valine 23, aspartate 24, phenylalanine 25, asparagine 26, glutamine 38, arginine 39, serine 62, histidine 63, glycine 65, arginine 66, leucine 121, arginine 122, histidine 169, and arginine 170. Glycine 213 contributes to the ADP binding site. A CDP-binding site is contributed by glycine 213. Residues alanine 214 and lysine 215 each coordinate AMP. Residue alanine 214 coordinates ATP. Alanine 214 is a binding site for Mg(2+). Aspartate 218 lines the CDP pocket. Aspartate 218 lines the Mg(2+) pocket. Residue lysine 219 coordinates AMP. An ATP-binding site is contributed by lysine 219. Position 237 (glycine 237) interacts with ADP. Glycine 237 provides a ligand contact to CDP. AMP is bound by residues glycine 238 and glycine 312. ATP is bound by residues glycine 238 and glycine 312. The CDP site is built by glycine 337 and phenylalanine 342. Phenylalanine 342 contacts ADP. Glutamate 343 serves as a coordination point for AMP. ATP contacts are provided by glutamate 343, aspartate 374, and threonine 375. Aspartate 374 contacts Mg(2+).

Belongs to the phosphoglycerate kinase family. In terms of assembly, monomer. It depends on Mg(2+) as a cofactor.

It is found in the cytoplasm. The protein localises to the mitochondrion. It carries out the reaction (2R)-3-phosphoglycerate + ATP = (2R)-3-phospho-glyceroyl phosphate + ADP. The protein operates within carbohydrate degradation; glycolysis; pyruvate from D-glyceraldehyde 3-phosphate: step 2/5. Its function is as follows. Catalyzes one of the two ATP producing reactions in the glycolytic pathway via the reversible conversion of 1,3-diphosphoglycerate to 3-phosphoglycerate. Both L- and D- forms of purine and pyrimidine nucleotides can be used as substrates, but the activity is much lower on pyrimidines. Negatively regulates the biosynthesis of acetyl-CoA from pyruvate in the mitochondrion. The chain is Phosphoglycerate kinase (PGK1) from Yarrowia lipolytica (strain CLIB 122 / E 150) (Yeast).